We begin with the raw amino-acid sequence, 326 residues long: Heterodimeric geranylgeranyl pyrophosphate synthase small subunit, chloroplastic (326 aa).

The N-terminal 33 residues, 1-33, are a transit peptide targeting the chloroplast; sequence MLFSGSAIPLSSFCSLPEKPHTLPMKLSPAAIR. Residues K88 and H120 each coordinate isopentenyl diphosphate. D127 and D133 together coordinate Mg(2+). R138 lines the dimethylallyl diphosphate pocket. Residue R139 participates in isopentenyl diphosphate binding. The dimethylallyl diphosphate site is built by K220 and Q258. Residues 274-301 are a coiled coil; the sequence is GAEKGMMEMAEELKEKAKKELQVFDNKY.

The protein belongs to the FPP/GGPP synthase family. Part of a heterodimeric geranyl(geranyl)diphosphate synthase. Interacts with GGPPS1 or GGPPS2, but not with GGPPS9. Interacts with LIL3.1 and LIL3.2. Mg(2+) is required as a cofactor. As to expression, expressed ubiquitously.

It localises to the plastid. It is found in the chloroplast thylakoid membrane. Functionally, heterodimeric geranyl(geranyl)-diphosphate (GPP) synthase small subunit. The small subunit alone is inactive in vitro while the large subunit GGPPS1 catalyzes mainly the production of geranygeranyl-diphosphate in vitro. Upon association of the two subunits, the product profile changes and the production of gerany-diphosphate is strongly increased. The sequence is that of Heterodimeric geranylgeranyl pyrophosphate synthase small subunit, chloroplastic (GGR) from Arabidopsis thaliana (Mouse-ear cress).